Reading from the N-terminus, the 77-residue chain is Large ribosomal subunit protein bL28 (77 aa).

The interval 1–25 (MARVCQVTGKAPMSGNNVSHANNKT) is disordered.

Belongs to the bacterial ribosomal protein bL28 family.

This Paraburkholderia phymatum (strain DSM 17167 / CIP 108236 / LMG 21445 / STM815) (Burkholderia phymatum) protein is Large ribosomal subunit protein bL28.